We begin with the raw amino-acid sequence, 277 residues long: Phosphoenolpyruvate synthase regulatory protein (277 aa).

Glycine 157–threonine 164 contacts ADP.

This sequence belongs to the pyruvate, phosphate/water dikinase regulatory protein family. PSRP subfamily.

The enzyme catalyses [pyruvate, water dikinase] + ADP = [pyruvate, water dikinase]-phosphate + AMP + H(+). It catalyses the reaction [pyruvate, water dikinase]-phosphate + phosphate + H(+) = [pyruvate, water dikinase] + diphosphate. Bifunctional serine/threonine kinase and phosphorylase involved in the regulation of the phosphoenolpyruvate synthase (PEPS) by catalyzing its phosphorylation/dephosphorylation. This is Phosphoenolpyruvate synthase regulatory protein from Shigella boydii serotype 4 (strain Sb227).